A 234-amino-acid chain; its full sequence is Phosphatidylinositol phosphate synthase (234 aa).

2 helical membrane-spanning segments follow: residues 28-48 and 54-70; these read LTPD…ALVL and LFPG…FDML. Residue 31–34 coordinates a CDP-1,2-diacyl-sn-glycerol; that stretch reads DAVT. Positions 68 and 71 each coordinate Mg(2+). 3 residues coordinate a CDP-1,2-diacyl-sn-glycerol: Gly72, Arg76, and Thr82. Mg(2+) is bound by residues Asp89 and Asp93. The next 4 helical transmembrane spans lie at 91-110, 116-134, 155-173, and 179-197; these read ACDR…WVAF, LLVV…ISYI, RLII…FIAW, and VAMW…QRLY. Catalysis depends on Asp93, which acts as the Proton acceptor. A disordered region spans residues 211–234; it reads PSAPVRDDDAQGHPRSGDPGKTQR. Positions 215 to 228 are enriched in basic and acidic residues; sequence VRDDDAQGHPRSGD.

This sequence belongs to the CDP-alcohol phosphatidyltransferase class-I family. As to quaternary structure, homodimer. Mg(2+) is required as a cofactor.

The protein resides in the cell membrane. It catalyses the reaction a CDP-1,2-diacyl-sn-glycerol + 1D-myo-inositol 3-phosphate = a 1,2-diacyl-sn-glycero-3-phospho-(1D-myo-inositol-3-phosphate) + CMP + H(+). It carries out the reaction 1,2-di-(9Z-octadecenoyl)-sn-glycero-3-cytidine-5'-diphosphate + 1D-myo-inositol 3-phosphate = 1,2-di-(9Z-octadecenoyl)-sn-glycero-3-phospho-(1D-myo-inositol-3-phosphate) + CMP + H(+). The protein operates within phospholipid metabolism; phosphatidylinositol phosphate biosynthesis. In terms of biological role, catalyzes the conjugation of the 1'-hydroxyl group of D-myo-inositol-3-phosphate (also named L-myo-inositol-1-phosphate) with a lipid tail of cytidine diphosphate diacylglycerol (CDP-DAG), forming phosphatidylinositol phosphate (PIP) and CMP. PIP is a precursor of phosphatidylinositol (PI) which is an essential lipid for mycobacteria required for formation of their cell wall. The polypeptide is Phosphatidylinositol phosphate synthase (Mycobacterium marinum (strain ATCC BAA-535 / M)).